The chain runs to 81 residues: Teretoxin Tsu6.8 (81 aa).

A signal peptide spans M1–L21. Residues G22–R45 constitute a propeptide that is removed on maturation.

It belongs to the teretoxin M (TM) superfamily. Post-translationally, contains 3 disulfide bonds. As to expression, expressed by the venom duct.

The protein localises to the secreted. In Terebra subulata (Chocolate spotted auger), this protein is Teretoxin Tsu6.8.